The sequence spans 386 residues: S-adenosylmethionine synthase (386 aa).

H16 lines the ATP pocket. Mg(2+) is bound at residue D18. E44 contacts K(+). L-methionine-binding residues include E57 and Q100. A flexible loop region spans residues 100–110; sequence QSGDIAMGVDE. ATP-binding positions include 165 to 167, D240, 246 to 247, A263, and K267; these read DAK and RK. D240 lines the L-methionine pocket. K271 is a binding site for L-methionine.

Belongs to the AdoMet synthase family. As to quaternary structure, homotetramer; dimer of dimers. Requires Mg(2+) as cofactor. It depends on K(+) as a cofactor.

It localises to the cytoplasm. The enzyme catalyses L-methionine + ATP + H2O = S-adenosyl-L-methionine + phosphate + diphosphate. It functions in the pathway amino-acid biosynthesis; S-adenosyl-L-methionine biosynthesis; S-adenosyl-L-methionine from L-methionine: step 1/1. Its function is as follows. Catalyzes the formation of S-adenosylmethionine (AdoMet) from methionine and ATP. The overall synthetic reaction is composed of two sequential steps, AdoMet formation and the subsequent tripolyphosphate hydrolysis which occurs prior to release of AdoMet from the enzyme. The chain is S-adenosylmethionine synthase from Hahella chejuensis (strain KCTC 2396).